The chain runs to 294 residues: uncharacterized protein (294 aa).

This is an uncharacterized protein from Methanocaldococcus jannaschii (strain ATCC 43067 / DSM 2661 / JAL-1 / JCM 10045 / NBRC 100440) (Methanococcus jannaschii).